Here is a 160-residue protein sequence, read N- to C-terminus: Large ribosomal subunit protein uL16 (160 aa).

The interval 138-160 is disordered; that stretch reads KNLEAPSQEKTKNSKKSQEEVKQ.

It belongs to the universal ribosomal protein uL16 family. Part of the 50S ribosomal subunit.

In terms of biological role, binds 23S rRNA and is also seen to make contacts with the A and possibly P site tRNAs. This Prochlorococcus marinus (strain MIT 9215) protein is Large ribosomal subunit protein uL16.